A 580-amino-acid chain; its full sequence is Potassium-transporting ATPase potassium-binding subunit (580 aa).

A run of 10 helical transmembrane segments spans residues 3–23 (ASGALQPALYLAVLIGLSVPL), 65–85 (DYAFAVLAFNLAGLLVLYALQ), 136–156 (GLGVQNFVSAATGMAVLVALI), 179–199 (LYILLPLSLLLAVLLVSQGVV), 263–283 (LSNFLEMLAILLIPAALCHTF), 293–313 (GWAVLAAMTAIFAVLLVACVA), 399–419 (GLYGMLMFVVIAVFVAGLMVG), 436–456 (MASLVVLFPAITVLVGTAIAV), 504–524 (AIGVAMLVGRYAVIVPVLALA), and 546–566 (LFVGLLTGTVLLVGALTFVPA).

Belongs to the KdpA family. In terms of assembly, the system is composed of three essential subunits: KdpA, KdpB and KdpC.

It localises to the cell inner membrane. In terms of biological role, part of the high-affinity ATP-driven potassium transport (or Kdp) system, which catalyzes the hydrolysis of ATP coupled with the electrogenic transport of potassium into the cytoplasm. This subunit binds the periplasmic potassium ions and delivers the ions to the membrane domain of KdpB through an intramembrane tunnel. The protein is Potassium-transporting ATPase potassium-binding subunit of Sorangium cellulosum (strain So ce56) (Polyangium cellulosum (strain So ce56)).